Consider the following 325-residue polypeptide: Probable cell division protein WhiA (325 aa).

Residues 273–306 (SLEELGRLADPPMTKDAVAGRIRRLLSMADRKAK) constitute a DNA-binding region (H-T-H motif).

The protein belongs to the WhiA family.

Involved in cell division and chromosome segregation. The protein is Probable cell division protein WhiA of Mycobacterium bovis (strain BCG / Tokyo 172 / ATCC 35737 / TMC 1019).